The following is a 104-amino-acid chain: QPKATPSVTLFPPSSEELKTDKATLVCMVTDFYPGVMTVVWKADGTPITQGVETTQPFKQNNKYMATSYLLLTAKAWETHSNYSCQVTHEENTVEKSLSRAECS.

The 94-residue stretch at 6–99 (PSVTLFPPSS…EENTVEKSLS (94 aa)) folds into the Ig-like domain. An intrachain disulfide couples C27 to C85.

This is Ig lambda-1 chain C region from Rattus norvegicus (Rat).